Consider the following 180-residue polypeptide: Large ribosomal subunit protein uL5 (180 aa).

The protein belongs to the universal ribosomal protein uL5 family. Part of the 50S ribosomal subunit; part of the 5S rRNA/L5/L18/L25 subcomplex. Contacts the 5S rRNA and the P site tRNA. Forms a bridge to the 30S subunit in the 70S ribosome.

Its function is as follows. This is one of the proteins that bind and probably mediate the attachment of the 5S RNA into the large ribosomal subunit, where it forms part of the central protuberance. In the 70S ribosome it contacts protein S13 of the 30S subunit (bridge B1b), connecting the 2 subunits; this bridge is implicated in subunit movement. Contacts the P site tRNA; the 5S rRNA and some of its associated proteins might help stabilize positioning of ribosome-bound tRNAs. The sequence is that of Large ribosomal subunit protein uL5 from Chlamydia abortus (strain DSM 27085 / S26/3) (Chlamydophila abortus).